A 223-amino-acid polypeptide reads, in one-letter code: MDPPRLRVATYLLLLSVGLLLHGGACQPYYLLRPIPSDSLPIVELKEDPGPVFDPKERDLNETELKSVLGDFDSRFLSVLPPAEDGHAGNDELDDFDAQRWGGALPKEIRAVDFDAPQLGKKHKPSKKLKRRLQQWLWAYSFCPLAHAWTDLGSRFWPRFVRAGSCLSKRSCSVPEGMTCKPATSTHLTILRWRCVQRKVGLKCAWIPMQYPVITDCKCSCSG.

The N-terminal stretch at 1–26 (MDPPRLRVATYLLLLSVGLLLHGGAC) is a signal peptide. Asn61 carries N-linked (GlcNAc...) asparagine glycosylation. Cystine bridges form between Cys143–Cys180, Cys166–Cys217, Cys172–Cys219, and Cys195–Cys204.

The protein belongs to the noggin family. In terms of assembly, homodimer.

The protein localises to the secreted. Its function is as follows. Inhibitor of bone morphogenetic proteins (BMP) signaling. This Takifugu rubripes (Japanese pufferfish) protein is Noggin (nog).